Here is a 284-residue protein sequence, read N- to C-terminus: UDP-N-acetylenolpyruvoylglucosamine reductase (284 aa).

The 160-residue stretch at 21–180 (KIGGPARLFV…LKAAFKLKKA (160 aa)) folds into the FAD-binding PCMH-type domain. The active site involves arginine 159. Serine 209 functions as the Proton donor in the catalytic mechanism. Residue glutamate 280 is part of the active site.

This sequence belongs to the MurB family. The cofactor is FAD.

It localises to the cytoplasm. It catalyses the reaction UDP-N-acetyl-alpha-D-muramate + NADP(+) = UDP-N-acetyl-3-O-(1-carboxyvinyl)-alpha-D-glucosamine + NADPH + H(+). Its pathway is cell wall biogenesis; peptidoglycan biosynthesis. Cell wall formation. This is UDP-N-acetylenolpyruvoylglucosamine reductase from Pseudothermotoga lettingae (strain ATCC BAA-301 / DSM 14385 / NBRC 107922 / TMO) (Thermotoga lettingae).